We begin with the raw amino-acid sequence, 67 residues long: Andropin (67 aa).

The signal sequence occupies residues 1–19; it reads MKYFLVLVVLTLILAISVG.

It belongs to the andropin family. In terms of tissue distribution, ejaculatory duct of adult males.

Its subcellular location is the secreted. Functionally, male-specific peptide with moderate activity against Gram-positive bacteria. The chain is Andropin (Anp) from Drosophila orena (Fruit fly).